The chain runs to 936 residues: Myocardin-related transcription factor A (936 aa).

RPEL repeat units lie at residues 15-40 (TVLQ…PPLK), 59-84 (DYLK…EETS), and 103-128 (DDLN…PVET). Positions 62 to 100 (KRKIRSRPERAELVRMHILEETSAEPSLQAKQIKLKRAR) match the Bipartite Nuclear localization signal motif. Disordered stretches follow at residues 146-185 (SSFD…TQIP), 234-258 (SQPK…KVKK), and 401-422 (SQDP…QAKP). Residues 160 to 170 (QPASQESQGSI) are compositionally biased toward polar residues. Over residues 239 to 254 (SFEKSQRIKKPKEPKP) the composition is skewed to basic and acidic residues. Positions 368–402 (LDEMKVAELKLELKHRGLPVSGTKIDLIERLKASQ) constitute an SAP domain. Low complexity predominate over residues 404-416 (PSTATAASAKPTP). Residues 497–542 (DARDKDLMLREKDRQIEELTQRLKQKQELVERLRQQLEQEKRTPQH) are a coiled coil. The tract at residues 707-755 (HNESPATPPQQPEPEPPPHSIFLTHSSPQWSKNPPGYDEAMKQQPNSCE) is disordered. Over residues 712–725 (ATPPQQPEPEPPPH) the composition is skewed to pro residues. A compositionally biased stretch (polar residues) spans 729 to 738 (LTHSSPQWSK).

In terms of assembly, interacts with srf, forming the srf-mrtfa nuclear complex which binds the 5'-CArG-3' consensus motif (CArG box) on DNA via srf. Interacts (via RPEL repeats) with globular actin (G-actin), thereby regulating its subcellular location and activity of the complex formed with srf.

The protein localises to the cytoplasm. It is found in the nucleus. In terms of biological role, transcription coactivator that associates with the serum response factor (srf) transcription factor to control expression of genes regulating the cytoskeleton during development, morphogenesis and cell migration. The srf-mrtfa complex activity responds to Rho GTPase-induced changes in cellular globular actin (G-actin) concentration, thereby coupling cytoskeletal gene expression to cytoskeletal dynamics. Mrtfa binds G-actin via its RPEL repeats, regulating activity of the mrtfa-srf complex. Activity is also regulated by filamentous actin (F-actin) in the nucleus. The polypeptide is Myocardin-related transcription factor A (mrtfa) (Xenopus laevis (African clawed frog)).